We begin with the raw amino-acid sequence, 158 residues long: NAD(P)H-quinone oxidoreductase subunit J, chloroplastic (158 aa).

The protein belongs to the complex I 30 kDa subunit family. In terms of assembly, NDH is composed of at least 16 different subunits, 5 of which are encoded in the nucleus.

Its subcellular location is the plastid. The protein resides in the chloroplast thylakoid membrane. The catalysed reaction is a plastoquinone + NADH + (n+1) H(+)(in) = a plastoquinol + NAD(+) + n H(+)(out). It carries out the reaction a plastoquinone + NADPH + (n+1) H(+)(in) = a plastoquinol + NADP(+) + n H(+)(out). Its function is as follows. NDH shuttles electrons from NAD(P)H:plastoquinone, via FMN and iron-sulfur (Fe-S) centers, to quinones in the photosynthetic chain and possibly in a chloroplast respiratory chain. The immediate electron acceptor for the enzyme in this species is believed to be plastoquinone. Couples the redox reaction to proton translocation, and thus conserves the redox energy in a proton gradient. The chain is NAD(P)H-quinone oxidoreductase subunit J, chloroplastic from Lemna minor (Common duckweed).